A 236-amino-acid chain; its full sequence is Uridylate kinase (236 aa).

12–15 (KLSG) contacts ATP. The interval 20 to 25 (GEKGFG) is involved in allosteric activation by GTP. Position 54 (Gly-54) interacts with UMP. ATP is bound by residues Gly-55 and Arg-59. UMP is bound by residues Asp-72 and 133–140 (TGNPYFST). Positions 161, 166, and 169 each coordinate ATP.

Belongs to the UMP kinase family. Homohexamer.

The protein resides in the cytoplasm. It carries out the reaction UMP + ATP = UDP + ADP. Its pathway is pyrimidine metabolism; CTP biosynthesis via de novo pathway; UDP from UMP (UMPK route): step 1/1. Its activity is regulated as follows. Allosterically activated by GTP. Inhibited by UTP. In terms of biological role, catalyzes the reversible phosphorylation of UMP to UDP. The chain is Uridylate kinase from Alkaliphilus oremlandii (strain OhILAs) (Clostridium oremlandii (strain OhILAs)).